Reading from the N-terminus, the 194-residue chain is dCTP deaminase (194 aa).

DCTP is bound by residues 110-115 (RSSLAR), aspartate 128, 136-138 (VLE), tyrosine 171, lysine 178, and glutamine 182. Glutamate 138 functions as the Proton donor/acceptor in the catalytic mechanism. The disordered stretch occupies residues 172–194 (NKRKSAKYRDQQEAVASRISQDK).

It belongs to the dCTP deaminase family. In terms of assembly, homotrimer.

The catalysed reaction is dCTP + H2O + H(+) = dUTP + NH4(+). It participates in pyrimidine metabolism; dUMP biosynthesis; dUMP from dCTP (dUTP route): step 1/2. Catalyzes the deamination of dCTP to dUTP. This is dCTP deaminase from Shewanella loihica (strain ATCC BAA-1088 / PV-4).